Consider the following 107-residue polypeptide: EIVLTQSPAITAASLGQKVTITCSASSSVSYMHWYQQKSGTSPKPWIYEISKLASGVPARFSGSGSGTSYSLTISSMEAEDAAIYYCQQWNYPLITFGAGTKLELKR.

The tract at residues 1 to 23 (EIVLTQSPAITAASLGQKVTITC) is framework-1. A disulfide bridge links Cys-23 with Cys-87. The tract at residues 24–33 (SASSSVSYMH) is complementarity-determining-1. The segment at 34-48 (WYQQKSGTSPKPWIY) is framework-2. The complementarity-determining-2 stretch occupies residues 49–55 (EISKLAS). Positions 56-87 (GVPARFSGSGSGTSYSLTISSMEAEDAAIYYC) are framework-3. The tract at residues 88–96 (QQWNYPLIT) is complementarity-determining-3. The segment at 97–106 (FGAGTKLELK) is framework-4.

This is Ig kappa chain V-VI region TEPC 601/TEPC 191 from Mus musculus (Mouse).